A 430-amino-acid polypeptide reads, in one-letter code: Gamma-glutamyl phosphate reductase (430 aa).

The protein belongs to the gamma-glutamyl phosphate reductase family.

The protein localises to the cytoplasm. It catalyses the reaction L-glutamate 5-semialdehyde + phosphate + NADP(+) = L-glutamyl 5-phosphate + NADPH + H(+). Its pathway is amino-acid biosynthesis; L-proline biosynthesis; L-glutamate 5-semialdehyde from L-glutamate: step 2/2. Its function is as follows. Catalyzes the NADPH-dependent reduction of L-glutamate 5-phosphate into L-glutamate 5-semialdehyde and phosphate. The product spontaneously undergoes cyclization to form 1-pyrroline-5-carboxylate. The chain is Gamma-glutamyl phosphate reductase from Rhodopseudomonas palustris (strain HaA2).